The primary structure comprises 86 residues: Toxin Td2 (86 aa).

A signal peptide spans 1–20 (MTRFVLFLNCFFLICMVVEC). Residues 21-83 (KEGYLMGADG…TWDRATNTCG (63 aa)) enclose the LCN-type CS-alpha/beta domain. Intrachain disulfides connect C31–C82, C35–C57, C43–C63, and C47–C65. R84 carries the post-translational modification Arginine amide.

Expressed by the venom gland.

The protein resides in the secreted. Functionally, beta toxins bind voltage-independently at site-4 of sodium channels (Nav) and shift the voltage of activation toward more negative potentials thereby affecting sodium channel activation and promoting spontaneous and repetitive firing. The sequence is that of Toxin Td2 from Tityus discrepans (Venezuelan scorpion).